The primary structure comprises 137 residues: Small ribosomal subunit protein uS12 (137 aa).

Residues 31–41 (MSRKQTNNTAP) are compositionally biased toward polar residues. The disordered stretch occupies residues 31–57 (MSRKQTNNTAPQKRGVATRVGTMTPKK). Asp-102 carries the post-translational modification 3-methylthioaspartic acid.

The protein belongs to the universal ribosomal protein uS12 family. In terms of assembly, part of the 30S ribosomal subunit. Contacts proteins S8 and S17. May interact with IF1 in the 30S initiation complex.

In terms of biological role, with S4 and S5 plays an important role in translational accuracy. Functionally, interacts with and stabilizes bases of the 16S rRNA that are involved in tRNA selection in the A site and with the mRNA backbone. Located at the interface of the 30S and 50S subunits, it traverses the body of the 30S subunit contacting proteins on the other side and probably holding the rRNA structure together. The combined cluster of proteins S8, S12 and S17 appears to hold together the shoulder and platform of the 30S subunit. This Oenococcus oeni (strain ATCC BAA-331 / PSU-1) protein is Small ribosomal subunit protein uS12.